The chain runs to 373 residues: Sensor protein DegM (373 aa).

The next 4 helical transmembrane spans lie at 27-47, 57-77, 91-111, and 122-142; these read ILLAFLYGGKRAGWGVAAIAV, LFLLGVVLIVLTALFYALCVN, YASLLVILPATIQTFGTLYLI, and VAGWLYIVFLVVTVVLVTYLF. One can recognise a Histidine kinase domain in the interval 170–370; it reads SIAHEVRNPL…KVVLSLPIEK (201 aa). A Phosphohistidine; by autocatalysis modification is found at H173.

Its subcellular location is the cell membrane. It catalyses the reaction ATP + protein L-histidine = ADP + protein N-phospho-L-histidine.. Involved in a sensory transduction pathway that enhances the production of minor proteases. The polypeptide is Sensor protein DegM (degM) (Bacillus sp. (strain B21-2)).